Reading from the N-terminus, the 247-residue chain is Probable transcriptional regulatory protein YPK_2146 (247 aa).

It belongs to the TACO1 family.

Its subcellular location is the cytoplasm. This Yersinia pseudotuberculosis serotype O:3 (strain YPIII) protein is Probable transcriptional regulatory protein YPK_2146.